The following is a 255-amino-acid chain: Type III pantothenate kinase (255 aa).

6–13 lines the ATP pocket; it reads DIGNTNIK. 107–110 contacts substrate; the sequence is GADR. Catalysis depends on aspartate 109, which acts as the Proton acceptor. Threonine 132 is an ATP binding site. Position 184 (threonine 184) interacts with substrate.

It belongs to the type III pantothenate kinase family. As to quaternary structure, homodimer. Requires NH4(+) as cofactor. The cofactor is K(+).

The protein localises to the cytoplasm. It carries out the reaction (R)-pantothenate + ATP = (R)-4'-phosphopantothenate + ADP + H(+). It functions in the pathway cofactor biosynthesis; coenzyme A biosynthesis; CoA from (R)-pantothenate: step 1/5. Functionally, catalyzes the phosphorylation of pantothenate (Pan), the first step in CoA biosynthesis. This chain is Type III pantothenate kinase, found in Roseiflexus sp. (strain RS-1).